Reading from the N-terminus, the 419-residue chain is Voltage-gated potassium channel subunit beta-1 (419 aa).

A disordered region spans residues 1-52 (MLAARTGAAGSQISEENTKLRRQSGFSVAGKDKSPKKASENAKDSSLSPSGE). Over residues 30–43 (GKDKSPKKASENAK) the composition is skewed to basic and acidic residues. NADP(+)-binding residues include Thr108, Trp109, Gln115, and Asp137. Tyr142 functions as the Proton donor/acceptor in the catalytic mechanism. Positions 210, 240, 241, 266, 295, 296, 297, 298, 299, 300, 306, 316, 375, 377, 381, 384, and 385 each coordinate NADP(+).

The protein belongs to the shaker potassium channel beta subunit family. In terms of assembly, homotetramer. Interaction with tetrameric potassium channel alpha subunits gives rise to a heterooctamer. Identified in potassium channel complexes containing KCNA1, KCNA2, KCNA4, KCNA5, KCNA6, KCNAB1 and KCNAB2. Part of a complex containing KCNA1, KCNA4 and LGI1; interaction with LGI1 inhibits down-regulation of KCNA1 channel activity. Interacts with the dimer formed by GNB1 and GNG2; this enhances KCNA1 binding. Interacts with SQSTM1. In brain, expression is most prominent in caudate nucleus, hippocampus and thalamus. Significant expression also detected in amygdala and subthalamic nucleus. Also expressed in both healthy and cardiomyopathic heart. Up to four times more abundant in left ventricle than left atrium.

It is found in the cytoplasm. Its subcellular location is the membrane. The protein localises to the cell membrane. It catalyses the reaction a primary alcohol + NADP(+) = an aldehyde + NADPH + H(+). The catalysed reaction is a secondary alcohol + NADP(+) = a ketone + NADPH + H(+). Its function is as follows. Regulatory subunit of the voltage-gated potassium (Kv) Shaker channels composed of pore-forming and potassium-conducting alpha subunits and of regulatory beta subunits. The beta-1/KCNAB1 cytoplasmic subunit mediates closure of delayed rectifier potassium channels by physically obstructing the pore via its N-terminal domain and increases the speed of channel closure for other family members. Promotes the inactivation of Kv1.1/KCNA1, Kv1.2/KCNA2, Kv1.4/KCNA4, Kv1.5/KCNA5 and Kv1.6/KCNA6 alpha subunit-containing channels. Displays nicotinamide adenine dinucleotide phosphate (NADPH)-dependent aldoketoreductase activity by catalyzing the NADPH-dependent reduction of a variety of endogenous aldehydes and ketones. The binding of NADPH is required for efficient down-regulation of potassium channel activity. Oxidation of the bound NADPH restrains N-terminal domain from blocking the channel, thereby decreasing N-type inactivation of potassium channel activity. Isoform KvB1.2 shows no effect on KCNA1, KCNA2 or KCNB1. The polypeptide is Voltage-gated potassium channel subunit beta-1 (Homo sapiens (Human)).